The primary structure comprises 439 residues: Paraneoplastic antigen-like protein 8A (439 aa).

The interval 208–439 (SALKAETPNN…RRATNESRKV (232 aa)) is disordered. Basic residues predominate over residues 231-249 (LVRRAGAKSRSRRKKQKKN). Composition is skewed to basic and acidic residues over residues 314–326 (GPREPPQDARAEA), 395–404 (SRREASDQKA), and 423–439 (AKPEGSPRRATNESRKV).

The protein belongs to the PNMA family.

The sequence is that of Paraneoplastic antigen-like protein 8A from Homo sapiens (Human).